A 301-amino-acid chain; its full sequence is Ribosomal protein L11 methyltransferase (301 aa).

The S-adenosyl-L-methionine site is built by threonine 146, glycine 167, aspartate 189, and asparagine 237.

This sequence belongs to the methyltransferase superfamily. PrmA family.

The protein resides in the cytoplasm. The catalysed reaction is L-lysyl-[protein] + 3 S-adenosyl-L-methionine = N(6),N(6),N(6)-trimethyl-L-lysyl-[protein] + 3 S-adenosyl-L-homocysteine + 3 H(+). In terms of biological role, methylates ribosomal protein L11. The protein is Ribosomal protein L11 methyltransferase of Prochlorococcus marinus (strain MIT 9313).